Here is a 323-residue protein sequence, read N- to C-terminus: Olfactory receptor 4K5 (323 aa).

Over 1 to 25 (MDKSNSSVVSEFVLLGLCSSQKLQL) the chain is Extracellular. Asn5 carries N-linked (GlcNAc...) asparagine glycosylation. Residues 26–49 (FYFCFFSVLYTVIVLGNLLIILTV) traverse the membrane as a helical segment. Over 50–57 (TSDTSLHS) the chain is Cytoplasmic. A helical membrane pass occupies residues 58–79 (PMYFLLGNLSFVDICQASFATP). The Extracellular segment spans residues 80–100 (KMIADFLSAHETISFSGCIAQ). Residues Cys97 and Cys189 are joined by a disulfide bond. A helical membrane pass occupies residues 101–120 (IFFIHLFTGGEMVLLVSMAY). Residues 121 to 139 (DRYVAICKPLYYVVIMSRR) are Cytoplasmic-facing. A helical transmembrane segment spans residues 140-158 (TCTVLVMISWAVSLVHTLS). At 159 to 195 (QLSFTVNLPFCGPNVVDSFFCDLPRVTKLACLDSYII) the chain is on the extracellular side. A helical membrane pass occupies residues 196–219 (EILIVVNSGILSLSTFSLLVSSYI). The Cytoplasmic portion of the chain corresponds to 220-235 (IILVTVWLKSSAAMAK). The helical transmembrane segment at 236–258 (AFSTLASHIAVVILFFGPCIFIY) threads the bilayer. The Extracellular segment spans residues 259–269 (VWPFTISPLDK). A helical transmembrane segment spans residues 270 to 289 (FLAIFYTVFTPVLNPIIYTL). At 290–323 (RNRDMKAAVRKIVNHYLRPRRISEMSLVVRTSFH) the chain is on the cytoplasmic side.

Belongs to the G-protein coupled receptor 1 family.

The protein resides in the cell membrane. In terms of biological role, odorant receptor. The protein is Olfactory receptor 4K5 (OR4K5) of Homo sapiens (Human).